A 571-amino-acid chain; its full sequence is Chaperonin GroEL 1 (571 aa).

ATP-binding positions include 29-32, Lys-50, 86-90, Gly-416, and Asp-498; these read TLGP and DGTTT.

This sequence belongs to the chaperonin (HSP60) family. In terms of assembly, forms a cylinder of 14 subunits composed of two heptameric rings stacked back-to-back. Interacts with the co-chaperonin GroES.

The protein localises to the cytoplasm. The catalysed reaction is ATP + H2O + a folded polypeptide = ADP + phosphate + an unfolded polypeptide.. Its function is as follows. Together with its co-chaperonin GroES, plays an essential role in assisting protein folding. The GroEL-GroES system forms a nano-cage that allows encapsulation of the non-native substrate proteins and provides a physical environment optimized to promote and accelerate protein folding. The sequence is that of Chaperonin GroEL 1 from Rhodopirellula baltica (strain DSM 10527 / NCIMB 13988 / SH1).